A 428-amino-acid chain; its full sequence is Trigger factor (428 aa).

The PPIase FKBP-type domain occupies 163 to 248 (GDTAVIDFEG…VHEVKAKQLP (86 aa)).

This sequence belongs to the FKBP-type PPIase family. Tig subfamily.

The protein resides in the cytoplasm. It catalyses the reaction [protein]-peptidylproline (omega=180) = [protein]-peptidylproline (omega=0). Functionally, involved in protein export. Acts as a chaperone by maintaining the newly synthesized protein in an open conformation. Functions as a peptidyl-prolyl cis-trans isomerase. The polypeptide is Trigger factor (Geobacillus thermodenitrificans (strain NG80-2)).